A 210-amino-acid chain; its full sequence is Probable GTP-binding protein EngB (210 aa).

The EngB-type G domain maps to 25-199; it reads TGIEVAFAGR…RQKLDTWFSE (175 aa). GTP-binding positions include 33–40, 60–64, 78–81, 145–148, and 178–180; these read GRSNAGKS, GRTQL, DLPG, TKAD, and FSS. Mg(2+)-binding residues include S40 and T62.

Belongs to the TRAFAC class TrmE-Era-EngA-EngB-Septin-like GTPase superfamily. EngB GTPase family. It depends on Mg(2+) as a cofactor.

Functionally, necessary for normal cell division and for the maintenance of normal septation. The chain is Probable GTP-binding protein EngB from Shigella boydii serotype 4 (strain Sb227).